We begin with the raw amino-acid sequence, 475 residues long: UDP-N-acetylmuramate--L-alanine ligase (475 aa).

An ATP-binding site is contributed by 112–118 (GTHGKTT).

Belongs to the MurCDEF family.

The protein resides in the cytoplasm. It catalyses the reaction UDP-N-acetyl-alpha-D-muramate + L-alanine + ATP = UDP-N-acetyl-alpha-D-muramoyl-L-alanine + ADP + phosphate + H(+). The protein operates within cell wall biogenesis; peptidoglycan biosynthesis. Functionally, cell wall formation. The polypeptide is UDP-N-acetylmuramate--L-alanine ligase (Cupriavidus pinatubonensis (strain JMP 134 / LMG 1197) (Cupriavidus necator (strain JMP 134))).